The chain runs to 305 residues: Putative UDP-glucose 4-epimerase (305 aa).

Residues 10–11, 30–35, 50–51, and 71–75 contribute to the NAD(+) site; these read FI, DNLTTG, DI, and QAAQI. Substrate contacts are provided by serine 115 and tyrosine 140. NAD(+)-binding residues include tyrosine 140 and lysine 144. The Proton acceptor role is filled by tyrosine 140. Residues asparagine 169, 183–184, 198–200, arginine 207, and 263–266 contribute to the substrate site; these read VI, IIF, and REGE.

The protein belongs to the NAD(P)-dependent epimerase/dehydratase family. It depends on NAD(+) as a cofactor.

It catalyses the reaction UDP-alpha-D-glucose = UDP-alpha-D-galactose. It functions in the pathway carbohydrate metabolism; galactose metabolism. In terms of biological role, involved in the metabolism of galactose. Catalyzes the conversion of UDP-galactose (UDP-Gal) to UDP-glucose (UDP-Glc) through a mechanism involving the transient reduction of NAD. The chain is Putative UDP-glucose 4-epimerase from Methanocaldococcus jannaschii (strain ATCC 43067 / DSM 2661 / JAL-1 / JCM 10045 / NBRC 100440) (Methanococcus jannaschii).